We begin with the raw amino-acid sequence, 210 residues long: WASH complex subunit 3 (210 aa).

The stretch at 49–73 forms a coiled coil; it reads EEKLASISLRIQQIETTLSILEAKL. A disordered region spans residues 173 to 210; sequence LDPNLLDTPDAPVPDAVKKNTLDQDDDSDDGSESSFSD. Acidic residues predominate over residues 195–204; the sequence is DQDDDSDDGS.

The protein belongs to the CCDC53 family. In terms of assembly, component of the WASH complex.

This Salmo salar (Atlantic salmon) protein is WASH complex subunit 3.